A 173-amino-acid polypeptide reads, in one-letter code: uncharacterized protein (173 aa).

The N-acetyltransferase domain maps to 4 to 173 (VKIVQVSEKD…TDFLLKKALV (170 aa)). Acetyl-CoA contacts are provided by residues 97 to 99 (IYL), 106 to 110 (RGLGK), and 136 to 138 (NEN).

This is an uncharacterized protein from Lactobacillus delbrueckii subsp. lactis.